The primary structure comprises 180 residues: Shikimate kinase (180 aa).

Position 15–20 (15–20 (GAGKTT)) interacts with ATP. Position 19 (threonine 19) interacts with Mg(2+). Residues aspartate 37, arginine 61, and glycine 83 each contribute to the substrate site. Arginine 121 contributes to the ATP binding site. Position 140 (arginine 140) interacts with substrate.

It belongs to the shikimate kinase family. In terms of assembly, monomer. It depends on Mg(2+) as a cofactor.

The protein resides in the cytoplasm. The catalysed reaction is shikimate + ATP = 3-phosphoshikimate + ADP + H(+). It functions in the pathway metabolic intermediate biosynthesis; chorismate biosynthesis; chorismate from D-erythrose 4-phosphate and phosphoenolpyruvate: step 5/7. Functionally, catalyzes the specific phosphorylation of the 3-hydroxyl group of shikimic acid using ATP as a cosubstrate. The chain is Shikimate kinase from Psychrobacter sp. (strain PRwf-1).